We begin with the raw amino-acid sequence, 385 residues long: Transcription factor TGAL3 (385 aa).

Residues 62 to 113 form a disordered region; the sequence is LHALVGGGDGGDDAGEQRGADSSAVSKERRGDQKMQRRLAQNREAARKSRMR. A compositionally biased stretch (basic and acidic residues) spans 87 to 96; that stretch reads SKERRGDQKM. Residues 93 to 137 form the bZIP domain; it reads DQKMQRRLAQNREAARKSRMRKKAYIQQLESSRSKLMHLEQELQR. The tract at residues 95–115 is basic motif; that stretch reads KMQRRLAQNREAARKSRMRKK. Residues 121-135 are leucine-zipper; that stretch reads LESSRSKLMHLEQEL. One can recognise a DOG1 domain in the interval 162-382; that stretch reads TLAFDLEYAR…RALSSLWLAR (221 aa).

It belongs to the bZIP family. Interacts with NPR1/NH1, NPR2/NH2 and NPR3/NH3.

The protein localises to the nucleus. Its function is as follows. Transcriptional regulator involved in defense response. The polypeptide is Transcription factor TGAL3 (Oryza sativa subsp. japonica (Rice)).